The following is a 177-amino-acid chain: MATVNEFRGAMSRGGGVQRQHRWRVTISFPSFAASADQTRDVCLLAVTTNTPTGQLGEILVPWGGRELPFPGDRRFEALPITFINVVNNGPYNSMEVWQQYINGSESNRASANPDEYFRDVVLELLDANDNVTKTWTLQGAWPQNLGQLELDMSAMDSYTQFTCDLRYFQAVSDRSR.

This sequence belongs to the T4-like viruses Gp19 protein family.

The protein resides in the virion. Structural component of the bacteriophage tail which consists of a contractile sheath, a tube and a baseplate. The central cylindrical segment of the tail consists of a rigid tube, composed of multiple copies of the tail tube protein. During infection, contraction of the sheath drives the central tube through the host outer membrane, creating a channel for DNA ejection from the capsid into the host cell. In Serratia marcescens (Serratia marcescens bacteriophage KSP90), this protein is Tail tube protein.